The sequence spans 664 residues: Macoilin (664 aa).

Helical transmembrane passes span 28–48, 75–95, 120–140, and 154–174; these read TFLYLKFLVVWALVLLADFVL, AFSVFFVCVAFTSNIICLLFI, VCLPTVSLWILFVYIEAAIRF, and FAAHCIGYPVVTLGFGFKSYV. The span at 253-265 shows a compositional bias: basic and acidic residues; sequence REKGKEKDKDAKK. Residues 253–274 are disordered; the sequence is REKGKEKDKDAKKHNLGINNNN. Residue S305 is modified to Phosphoserine. The segment covering 320 to 348 has biased composition (polar residues); it reads KNYKNASGVVNSSPRSHSATNGSIPSSSS. The interval 320–375 is disordered; the sequence is KNYKNASGVVNSSPRSHSATNGSIPSSSSKNEKKQKCTSKSPSTHKDLMENCIPNN. N-linked (GlcNAc...) asparagine glycosylation occurs at N324. The residue at position 332 (S332) is a Phosphoserine. N340 and N452 each carry an N-linked (GlcNAc...) asparagine glycan. Positions 630–664 are disordered; it reads TSPLSPVSPHYSSKFVETSPSGLDPNASVYQPLKK. S631 and S634 each carry phosphoserine. An N-linked (GlcNAc...) asparagine glycan is attached at N655.

It belongs to the macoilin family.

It localises to the rough endoplasmic reticulum membrane. The protein resides in the nucleus membrane. Its function is as follows. Plays a role in the regulation of neuronal activity. In Canis lupus familiaris (Dog), this protein is Macoilin (MACO1).